A 474-amino-acid chain; its full sequence is Vitamin D-binding protein (474 aa).

An N-terminal signal peptide occupies residues 1 to 16; sequence MKRVLVLLLAVAFGHA. 3 Albumin domains span residues 17–208, 209–394, and 395–474; these read LERG…QLKH, LSLL…LLKK, and ELSS…KNIL. Disulfide bonds link cysteine 29-cysteine 75, cysteine 74-cysteine 83, cysteine 96-cysteine 112, cysteine 111-cysteine 122, cysteine 145-cysteine 190, cysteine 189-cysteine 198, cysteine 220-cysteine 266, cysteine 265-cysteine 273, cysteine 286-cysteine 300, cysteine 299-cysteine 311, cysteine 335-cysteine 376, cysteine 375-cysteine 384, cysteine 407-cysteine 453, and cysteine 452-cysteine 462.

The protein belongs to the ALB/AFP/VDB family. In terms of assembly, associates with membrane-bound immunoglobulin on the surface of B-lymphocytes and with IgG Fc receptor on the membranes of T-lymphocytes. Interacts with LRP2; the interaction is required for renal uptake of GC in complex with 25-hydroxyvitamin D3. Allele GC*1S is O-glycosylated at Thr-436. The trisaccharide sugar moiety can be modified by the successive removal of neuraminic acid and galactose leaving an O-mceeN-acetyl-galactosamine. This conversion is thought to produce a macrophage-activating factor (Gc-MAF). Only a minor proportion of plasma GC is O-glycosylated. The potential N-glycosylation site predicted at Asn-288 is thought to be nonglycosylated. As to expression, expressed in the liver. Found in plasma, ascites, cerebrospinal fluid and urine.

It localises to the secreted. Functionally, involved in vitamin D transport and storage, scavenging of extracellular G-actin, enhancement of the chemotactic activity of C5 alpha for neutrophils in inflammation and macrophage activation. This is Vitamin D-binding protein (GC) from Homo sapiens (Human).